A 555-amino-acid chain; its full sequence is MFKLLIPNKYNYVIRPLVRFKSIKSPKSPKPKPTAKLSPNVFSSGKFSQLHNDTSTTNIESKITSFDQLKIFPSVREAMIKEIKSQYNLKGPRHSNIDEIDIKPTPVQIAAIRKINQTRKLKVPNKDLEGMDDAERIQFELQNANEIQKTKVFTVAAETGSGKTWSYLAPLLSKLKSDDMEFWKSDPEGYDNTRKKGQFVKSVILLPTNELVDQVYETLQRANSFELDHKGAPGNFTSFLELPENKTMNITTMKLGQGEAPVRLFRQLETKGPIDVLITTPGKIVAFSKLVNINRPFRVFANVKYCVLDEADTLFDDSFEKNTTDVITHFPKLLDLILVSATIPKVFEKKLSKLFPDQRSLIRVATPSLHKVPRNIKVMTIDADVAPYNGSKPRCLAQALYAISKDGTEPGYVKRIIVFVNEKSEVDGIVESMITKYKVRPEDIVGVSGSVNIRDRKDMLQPFLQPAELIENDDFGSKVKILVTTDLLARGLNFQGVKNVILLGLPRNSVDLVHRLGRTGRMNQNGRVFVIVDKKSKKSWVKGLGNAIIRGLRIG.

Residues methionine 1 to serine 25 constitute a mitochondrion transit peptide. The Q motif signature appears at aspartate 101–glutamine 108. The region spanning alanine 144–leucine 361 is the Helicase ATP-binding domain. Residue alanine 157–threonine 164 participates in ATP binding. The DEAD box signature appears at aspartate 309–aspartate 312. Residues cysteine 395–glycine 555 enclose the Helicase C-terminal domain.

The protein belongs to the DEAD box helicase family. MRH4 subfamily.

The protein localises to the mitochondrion. It catalyses the reaction ATP + H2O = ADP + phosphate + H(+). ATP-binding RNA helicase involved in mitochondrial RNA metabolism. Required for maintenance of mitochondrial DNA. The sequence is that of ATP-dependent RNA helicase MRH4, mitochondrial (MRH4) from Candida albicans (strain SC5314 / ATCC MYA-2876) (Yeast).